We begin with the raw amino-acid sequence, 87 residues long: TKSRYRNRRSRPRRRYGRRMRKTRCRRKGRRISRRPRHTTYRRRVRKIVHLKRRSRPRDEIDNLKVKNNRRLNESLKQHRLPMRVPV.

The tract at residues 1–36 (TKSRYRNRRSRPRRRYGRRMRKTRCRRKGRRISRRP) is disordered.

Its subcellular location is the nucleus. The protein resides in the chromosome. Involved in nuclear basic protein transition: histones are replaced by spermatid specific proteins which are themselves replaced by protamines in late spermatids. This chain is Spermatid-specific protein S1, found in Scyliorhinus canicula (Small-spotted catshark).